The primary structure comprises 441 residues: Protein MPE1 (441 aa).

In terms of domain architecture, DWNN spans 5-78 (IFYRFKSQRN…STSVIVKRSP (74 aa)). Residues 180 to 197 (YMCYRCGGRDHWIKNCPT) form a CCHC-type zinc finger. The residue at position 221 (serine 221) is a Phosphoserine. The segment covering 355 to 364 (KKQEELHGSS) has biased composition (basic and acidic residues). Residues 355–400 (KKQEELHGSSKDGNQPETKKMKLMDPTGTAGLNNNTSLPTSVNNGG) are disordered. Polar residues predominate over residues 384 to 400 (AGLNNNTSLPTSVNNGG).

As to quaternary structure, component of the cleavage and polyadenylation factor (CPF) complex, which is composed of PTI1, SYC1, SSU72, GLC7, MPE1, REF2, PFS2, PTA1, YSH1/BRR5, SWD2, CFT2/YDH1, YTH1, CFT1/YHH1, FIP1 and PAP1.

Its subcellular location is the nucleus. In terms of biological role, component of the cleavage and polyadenylation factor (CPF) complex, which plays a key role in polyadenylation-dependent pre-mRNA 3'-end formation and cooperates with cleavage factors including the CFIA complex and NAB4/CFIB. This chain is Protein MPE1 (MPE1), found in Saccharomyces cerevisiae (strain ATCC 204508 / S288c) (Baker's yeast).